Reading from the N-terminus, the 79-residue chain is Small ribosomal subunit protein bS18 (79 aa).

It belongs to the bacterial ribosomal protein bS18 family. In terms of assembly, part of the 30S ribosomal subunit. Forms a tight heterodimer with protein bS6.

Functionally, binds as a heterodimer with protein bS6 to the central domain of the 16S rRNA, where it helps stabilize the platform of the 30S subunit. In Bacillus velezensis (strain DSM 23117 / BGSC 10A6 / LMG 26770 / FZB42) (Bacillus amyloliquefaciens subsp. plantarum), this protein is Small ribosomal subunit protein bS18.